We begin with the raw amino-acid sequence, 173 residues long: Crossover junction endodeoxyribonuclease RuvC (173 aa).

Active-site residues include Asp8, Glu67, and Asp139. Mg(2+) contacts are provided by Asp8, Glu67, and Asp139.

The protein belongs to the RuvC family. Homodimer which binds Holliday junction (HJ) DNA. The HJ becomes 2-fold symmetrical on binding to RuvC with unstacked arms; it has a different conformation from HJ DNA in complex with RuvA. In the full resolvosome a probable DNA-RuvA(4)-RuvB(12)-RuvC(2) complex forms which resolves the HJ. The cofactor is Mg(2+).

The protein resides in the cytoplasm. The enzyme catalyses Endonucleolytic cleavage at a junction such as a reciprocal single-stranded crossover between two homologous DNA duplexes (Holliday junction).. Its function is as follows. The RuvA-RuvB-RuvC complex processes Holliday junction (HJ) DNA during genetic recombination and DNA repair. Endonuclease that resolves HJ intermediates. Cleaves cruciform DNA by making single-stranded nicks across the HJ at symmetrical positions within the homologous arms, yielding a 5'-phosphate and a 3'-hydroxyl group; requires a central core of homology in the junction. The consensus cleavage sequence is 5'-(A/T)TT(C/G)-3'. Cleavage occurs on the 3'-side of the TT dinucleotide at the point of strand exchange. HJ branch migration catalyzed by RuvA-RuvB allows RuvC to scan DNA until it finds its consensus sequence, where it cleaves and resolves the cruciform DNA. The chain is Crossover junction endodeoxyribonuclease RuvC from Citrobacter koseri (strain ATCC BAA-895 / CDC 4225-83 / SGSC4696).